The primary structure comprises 257 residues: UPF0246 protein Mpe_A2092 (257 aa).

It belongs to the UPF0246 family.

The sequence is that of UPF0246 protein Mpe_A2092 from Methylibium petroleiphilum (strain ATCC BAA-1232 / LMG 22953 / PM1).